The sequence spans 380 residues: Cytochrome b (380 aa).

A run of 4 helical transmembrane segments spans residues 34–54, 78–99, 114–134, and 179–199; these read FGSL…LLAT, WLIR…YLHI, WNTG…GYVL, and FFAL…IHLT. Positions 84 and 98 each coordinate heme b. Residues His183 and His197 each coordinate heme b. His202 provides a ligand contact to a ubiquinone. Helical transmembrane passes span 227 to 247, 289 to 309, 321 to 341, and 348 to 368; these read LKDI…ALFS, LGGV…PLLH, FSQF…WVGS, and FIII…LLFP.

It belongs to the cytochrome b family. The cytochrome bc1 complex contains 11 subunits: 3 respiratory subunits (MT-CYB, CYC1 and UQCRFS1), 2 core proteins (UQCRC1 and UQCRC2) and 6 low-molecular weight proteins (UQCRH/QCR6, UQCRB/QCR7, UQCRQ/QCR8, UQCR10/QCR9, UQCR11/QCR10 and a cleavage product of UQCRFS1). This cytochrome bc1 complex then forms a dimer. Requires heme b as cofactor.

Its subcellular location is the mitochondrion inner membrane. Functionally, component of the ubiquinol-cytochrome c reductase complex (complex III or cytochrome b-c1 complex) that is part of the mitochondrial respiratory chain. The b-c1 complex mediates electron transfer from ubiquinol to cytochrome c. Contributes to the generation of a proton gradient across the mitochondrial membrane that is then used for ATP synthesis. This chain is Cytochrome b (MT-CYB), found in Alle alle (Dovekie).